The chain runs to 462 residues: Notoamide biosynthesis cluster protein O' (462 aa).

3 helical membrane passes run 16–36, 55–75, and 79–99; these read IFNV…WAAM, AVIF…IAKI, and WAFA…YCNV. Asn102 carries an N-linked (GlcNAc...) asparagine glycan. 4 helical membrane-spanning segments follow: residues 104–124, 143–163, 173–193, and 233–253; these read SWYI…FWLT, AYWL…TLGV, ISVQ…FVAA, and ILLL…FSTY. Residue Asn254 is glycosylated (N-linked (GlcNAc...) asparagine). Transmembrane regions (helical) follow at residues 265–285, 297–317, 343–363, and 404–424; these read LSSL…GFFL, MAAF…AMVV, VYIL…WLIG, and AVAV…FVIY. The interval 443–462 is disordered; the sequence is LQTSGEGSHDIMDANGKSDD. Basic and acidic residues predominate over residues 449 to 462; sequence GSHDIMDANGKSDD.

It belongs to the unc-93 family.

Its subcellular location is the membrane. In terms of biological role, part of the gene cluster that mediates the biosynthesis of notoamide, a fungal indole alkaloid that belongs to a family of natural products containing a characteristic bicyclo[2.2.2]diazaoctane core. The first step of notoamide biosynthesis involves coupling of L-proline and L-tryptophan by the bimodular NRPS notE', to produce cyclo-L-tryptophan-L-proline called brevianamide F. The reverse prenyltransferase notF' then acts as a deoxybrevianamide E synthase and converts brevianamide F to deoxybrevianamide E via reverse prenylation at C-2 of the indole ring leading to the bicyclo[2.2.2]diazaoctane core. Deoxybrevianamide E is further hydroxylated at C-6 of the indole ring, likely catalyzed by the cytochrome P450 monooxygenase notG', to yield 6-hydroxy-deoxybrevianamide E. 6-hydroxy-deoxybrevianamide E is a specific substrate of the prenyltransferase notC' for normal prenylation at C-7 to produce 6-hydroxy-7-prenyl-deoxybrevianamide, also called notoamide S. As the proposed pivotal branching point in notoamide biosynthesis, notoamide S can be diverted to notoamide E through an oxidative pyran ring closure putatively catalyzed by either notH' cytochrome P450 monooxygenase or the notD' FAD-linked oxidoreductase. This step would be followed by an indole 2,3-epoxidation-initiated pinacol-like rearrangement catalyzed by the notB' FAD-dependent monooxygenase leading to the formation of notoamide C and notoamide D. On the other hand notoamide S is converted to notoamide T by notH' (or notD'), a bifunctional oxidase that also functions as the intramolecular Diels-Alderase responsible for generation of (-)-notoamide T. To generate antipodal (+)-notoaminide T, notH (or notD) in Aspergillus strain MF297-2 is expected to catalyze a Diels-Alder reaction leading to the opposite stereochemistry. The remaining oxidoreductase notD' (or notH') likely catalyzes the oxidative pyran ring formation to yield (-)-stephacidin A. The FAD-dependent monooxygenase notI' is highly similar to notB' and is predicted to catalyze a similar conversion from (-)-stephacidin A to (+)-notoamide B via the 2,3-epoxidation of (-)-stephacidin A followed by a pinacol-type rearrangement. Finally, it remains unclear which enzyme could be responsible for the final hydroxylation steps leading to notoamide A and sclerotiamide. The function of notO' in the notoamide biosynthesis has not been determined yet. The polypeptide is Notoamide biosynthesis cluster protein O' (Aspergillus versicolor).